The following is a 207-amino-acid chain: Fibroblast growth factor 18 (207 aa).

The first 27 residues, 1–27 (MYSAPSACTCLCLHFLLLCFQVQVLVA), serve as a signal peptide directing secretion. A glycan (N-linked (GlcNAc...) asparagine) is linked at Asn39. A disulfide bond links Cys109 and Cys127. A glycan (N-linked (GlcNAc...) asparagine) is linked at Asn137. The segment at 157-186 (GRPRKGPKTRENQQDVHFMKRYPKGQPELQ) is disordered. Residues 164 to 174 (KTRENQQDVHF) are compositionally biased toward basic and acidic residues.

This sequence belongs to the heparin-binding growth factors family. In terms of assembly, interacts with FGFR3 and FGFR4.

It localises to the secreted. Functionally, plays an important role in the regulation of cell proliferation, cell differentiation and cell migration. Required for normal ossification and bone development. Stimulates hepatic and intestinal proliferation. This is Fibroblast growth factor 18 (FGF18) from Homo sapiens (Human).